Consider the following 124-residue polypeptide: UPF0231 protein Shewmr7_3366 (124 aa).

Belongs to the UPF0231 family.

The chain is UPF0231 protein Shewmr7_3366 from Shewanella sp. (strain MR-7).